A 486-amino-acid polypeptide reads, in one-letter code: Inosine-5'-monophosphate dehydrogenase (486 aa).

2 CBS domains span residues Ile-99–Glu-154 and Met-156–Glu-215. Residues Asp-247 and Gly-294–Gly-296 each bind NAD(+). K(+)-binding residues include Gly-296 and Gly-298. Position 299 (Ser-299) interacts with IMP. K(+) is bound at residue Cys-301. Cys-301 acts as the Thioimidate intermediate in catalysis. IMP is bound by residues Asp-334–Gly-336, Gly-357–Asn-358, and Tyr-381–Gly-385. Arg-397 functions as the Proton acceptor in the catalytic mechanism. Glu-412 contacts IMP. Residues Glu-466, Ser-467, and His-468 each coordinate K(+).

This sequence belongs to the IMPDH/GMPR family. Homotetramer. It depends on K(+) as a cofactor.

The catalysed reaction is IMP + NAD(+) + H2O = XMP + NADH + H(+). It participates in purine metabolism; XMP biosynthesis via de novo pathway; XMP from IMP: step 1/1. Its activity is regulated as follows. Mycophenolic acid (MPA) is a non-competitive inhibitor that prevents formation of the closed enzyme conformation by binding to the same site as the amobile flap. In contrast, mizoribine monophosphate (MZP) is a competitive inhibitor that induces the closed conformation. MPA is a potent inhibitor of mammalian IMPDHs but a poor inhibitor of the bacterial enzymes. MZP is a more potent inhibitor of bacterial IMPDH. In terms of biological role, catalyzes the conversion of inosine 5'-phosphate (IMP) to xanthosine 5'-phosphate (XMP), the first committed and rate-limiting step in the de novo synthesis of guanine nucleotides, and therefore plays an important role in the regulation of cell growth. The protein is Inosine-5'-monophosphate dehydrogenase of Pyrococcus horikoshii (strain ATCC 700860 / DSM 12428 / JCM 9974 / NBRC 100139 / OT-3).